A 1269-amino-acid polypeptide reads, in one-letter code: MELEQMVVKELGISMDDLRELIDRELEKIEFVKQRKAQLLEMEQLVKQKEAEVDHVDKLFDNATRAVDDCETLVKSLYDQIGMTYKESSSEDEGSSKPTEVIEIPDEDDDDVMSVGSGEAVSKIPKEKHLLREAMAAMKRSRQDVQSIVEAIQKKSDGPQTRFSSHPSSPTSSVGGSNQASASNDMSKDGDLVVGMRILGKKRTKTWHKGTLISIQCVGTGKKFKVKFDNKGKSLLSGNHIAYDYHPPPENLTVGSRVVAKYKDGNQVWLYAGIVAEPPSSKNKMRYLIFFDDGYASYVTHAELYPVCRPWSKSWEDIEDVSCRDFIQEYVNAYPNRPMVLLKSGQLIKTEWEGTWWKSKVEEVDGSLVKILFLDDKRCEWIYRGSTRLEPMFSMKTSNASTQEKQQAGQQRTRPNVGAIRSKGPVVQFTHDLTGNEPEHNPAAPPSPQSMPSPQLIDTDSDSQQAQSKKQVAKKSTSFRPGSAGSGQSSPIPTESVPQPPAAPRPFQSNQSVQPVQSIQPIQPIHNIQTIQTIQGIQTIQAIQPIQSIQTLQPIQTIQPLQTIQTLQGNRIVTSIQQFQIIRTENIPAESTYKAPKEKLFYLPHVCNYTCLSRIRPLSHRGKNPLLVPLLYDFRRMTARRRVNRKMGFHVIYKSPCGLSLRTMPEIERYLFETQCKMLFLEMFCLDPYVLVDRKFQPQKPFYYIPDITYGKEDVMLSCVNEIDRTPPPQVAYSKERIPGKGVFINTGADYLVGCDCTDGCRDKSKCACHQLTIQATACTPGAQSNPMAGYQHKRLEECLPTGVYECNKRCKCSANMCNNRLVQHGLQVRLQLFKTQNKGWGIRGLDDIAKGSFVCIYAGKILTDDFADKEGLEMGDEYFANLDHIESVENFKEGYESDAKSSSDSSGVDLKEDHEENSGSEDQEESNDSSDDNFGKNEDITTSSVWRSYATRRTTRGQKENGTSETASKDSRTRDETTDCKLPEETSKNKVASWLSSNTMADSVMDSDSRSSLKMGEALETDKPKESEEASKYPRFAEGNRAYGYNPTPTKKDGVRRPVTKTALHQIKRQSSSAQPTEEVLTLSSSSDSEVGSGTNGSKKPAAQATANDSDDIQTISSGSDEEEEKKNVAASAGPVKRQVAVKSTRGFALKSTHGITVKSNMASGEGGPGRRNTRQFFDGEESCYIIDAKLEGNLGRYLNHSCSPNLFVQNVFVDTHDLRFPWVAFFASKRIRAGTELTWDYNYEVGSVEGKKLLCCCGSTECRGRLL.

Residues Lys-9–Ala-63 are a coiled coil. Disordered regions lie at residues Tyr-85–Val-121 and Gln-153–Lys-188. Positions Glu-103 to Val-112 are enriched in acidic residues. Positions Ser-164–Ser-177 are enriched in low complexity. Tudor domains are found at residues Glu-250–Ser-312 and Val-340–Met-395. Positions Lys-396–Arg-414 are enriched in polar residues. Residues Lys-396–Val-516 form a disordered region. The span at Asp-462–Ser-476 shows a compositional bias: low complexity. Positions Ser-486–Val-497 are enriched in polar residues. Residues His-620–Leu-691 form the MBD domain. The 74-residue stretch at Val-753 to Gly-826 folds into the Pre-SET domain. Zn(2+) contacts are provided by Cys-755, Cys-757, Cys-761, Cys-767, Cys-769, Cys-807, Cys-811, Cys-813, and Cys-818. Positions Val-829 to Asn-1244 constitute an SET domain. S-adenosyl-L-methionine contacts are provided by residues Lys-839–Trp-841, Asp-877, and Tyr-879. The tract at residues Glu-894–Arg-1139 is disordered. A compositionally biased stretch (acidic residues) spans Ser-919 to Asp-932. Composition is skewed to basic and acidic residues over residues Ala-968–Lys-989 and Glu-1021–Lys-1033. Positions Thr-1078 to Ser-1094 are enriched in low complexity. Residues Ala-1106–Gly-1120 are compositionally biased toward polar residues. S-adenosyl-L-methionine-binding positions include Arg-1198 and Asn-1201–His-1202. Residues Cys-1204, Cys-1257, Cys-1259, and Cys-1264 each coordinate Zn(2+). The Post-SET domain occupies Lys-1253–Leu-1269.

The protein belongs to the class V-like SAM-binding methyltransferase superfamily. Histone-lysine methyltransferase family. Suvar3-9 subfamily.

It localises to the nucleus. Its subcellular location is the chromosome. The enzyme catalyses N(6),N(6)-dimethyl-L-lysyl(9)-[histone H3] + S-adenosyl-L-methionine = N(6),N(6),N(6)-trimethyl-L-lysyl(9)-[histone H3] + S-adenosyl-L-homocysteine + H(+). In terms of biological role, histone methyltransferase that specifically trimethylates 'Lys-9' of histone H3. H3 'Lys-9' trimethylation represents a specific tag for epigenetic transcriptional repression by recruiting HP1 (CBX1, CBX3 and/or CBX5) proteins to methylated histones. Mainly functions in euchromatin regions, thereby playing a central role in the silencing of euchromatic genes. H3 'Lys-9' trimethylation is coordinated with DNA methylation. Plays a role in promoter hypermethylation and transcriptional silencing of tumor suppressor genes (TSGs) or other tumor-related genes. Also required to maintain a transcriptionally repressive state of genes in undifferentiated embryonic stem cells (ESCs). Associates at promoter regions of tumor suppressor genes (TSGs) leading to their gene silencing. The polypeptide is Histone-lysine N-methyltransferase SETDB1 (setdb1) (Xenopus laevis (African clawed frog)).